A 422-amino-acid polypeptide reads, in one-letter code: MTMGEVEKKPRRRFVGIKKAAEESDPSGSTTELVKKIKPKTNIRHAINQIPPELLNDEELNAAIKLLPSNYNFEIHKTVWNIRKHKAKRVAIQMPEGLLIYSLVISDILEQFCQCEIVVMGDVSYGACCIDDYTARSLDCDFIVHYAHSCLVPIDITTIKVLYIFVTINIDETHLIKTLQKNFPRGSRIAAFGTIQFNPTIHSMKDKLLQSEEHMLYIIPPQIKPLSKGEVLGCTSERLNKEQIDAMVYVGDGRFHLESAMIHNPEIPAFRYDPYNRRFTRERYDQKQLVEVRASAIDKARSSKKVGLILGALGRQGNLATVENLETKLKASGRTVVKIILSEIFPQKLAMFDDIDAFVQVACPRLSIDWGYAFNKPLLTPYETNVMLENDRMFNEKYYPMDYYHINGYGRGKVPNHDDVTI.

[4Fe-4S] cluster-binding residues include C128, C234, and C363.

This sequence belongs to the DPH1/DPH2 family. DPH1 subfamily. In terms of assembly, component of the 2-(3-amino-3-carboxypropyl)histidine synthase complex composed of DPH1, DPH2, DPH3 and a NADH-dependent reductase, predominantly CBR1. [4Fe-4S] cluster is required as a cofactor.

The protein localises to the cytoplasm. The enzyme catalyses L-histidyl-[translation elongation factor 2] + S-adenosyl-L-methionine = 2-[(3S)-amino-3-carboxypropyl]-L-histidyl-[translation elongation factor 2] + S-methyl-5'-thioadenosine + H(+). It participates in protein modification; peptidyl-diphthamide biosynthesis. Catalyzes the first step of diphthamide biosynthesis, a post-translational modification of histidine which occurs in elongation factor 2. DPH1 and DPH2 transfer a 3-amino-3-carboxypropyl (ACP) group from S-adenosyl-L-methionine (SAM) to a histidine residue, the reaction is assisted by a reduction system comprising DPH3 and a NADH-dependent reductase, predominantly CBR1. The chain is 2-(3-amino-3-carboxypropyl)histidine synthase subunit 1 (DPH1) from Kluyveromyces lactis (strain ATCC 8585 / CBS 2359 / DSM 70799 / NBRC 1267 / NRRL Y-1140 / WM37) (Yeast).